We begin with the raw amino-acid sequence, 109 residues long: Non-structural protein ORF4a (109 aa).

As to quaternary structure, interacts with host PRKRA/PACT.

It is found in the host cytoplasm. In terms of biological role, dsRNA-binding protein that plays a role in the inhibition of host innate response. Suppresses host PACT-induced activation of RIGI and MDA5 and thereby circumvents the production of type I interferons. Also prevents the activation of host NF-kappa-B. Inhibits the integrated stress response (ISR) in the infected cell by binding to dsRNA and inhibiting EIF2AK2-mediated phosphorylation of EIF2S1/eIF2-alpha. Stress granule formation is thus inhibited, which allows protein synthesis and viral replication. The polypeptide is Non-structural protein ORF4a (ORF4a) (Middle East respiratory syndrome-related coronavirus (isolate United Kingdom/H123990006/2012) (MERS-CoV)).